We begin with the raw amino-acid sequence, 98 residues long: MPRDKKLVHRATSDVEDEDNDQREEEWSDNDQPSTKDDTAAPTETGLEPSSASNGHSQPAIVAALEQERRQHLESIILKRTLYLQQQRQKQQEGTNRP.

Residues 1 to 63 (MPRDKKLVHR…NGHSQPAIVA (63 aa)) are disordered. Residues 14–29 (DVEDEDNDQREEEWSD) are compositionally biased toward acidic residues. Over residues 48–57 (EPSSASNGHS) the composition is skewed to polar residues.

This is an uncharacterized protein from Aedes vexans (Inland floodwater mosquito).